The primary structure comprises 168 residues: Cell division inhibitor SulA (168 aa).

Residues 105 to 111 form a ftsZ binding region; it reads ALETGNY. The tract at residues 161-168 is lon protease binding; that stretch reads RIHSGMVH.

It belongs to the SulA family. In terms of assembly, interacts with FtsZ. Is rapidly cleaved and degraded by the Lon protease once DNA damage is repaired.

Component of the SOS system and an inhibitor of cell division. Accumulation of SulA causes rapid cessation of cell division and the appearance of long, non-septate filaments. In the presence of GTP, binds a polymerization-competent form of FtsZ in a 1:1 ratio, thus inhibiting FtsZ polymerization and therefore preventing it from participating in the assembly of the Z ring. This mechanism prevents the premature segregation of damaged DNA to daughter cells during cell division. The polypeptide is Cell division inhibitor SulA (Cronobacter sakazakii (strain ATCC BAA-894) (Enterobacter sakazakii)).